The sequence spans 431 residues: Trigger factor (431 aa).

The 86-residue stretch at 163–248 (GHFAVIDFTG…LSEIKVKELP (86 aa)) folds into the PPIase FKBP-type domain.

This sequence belongs to the FKBP-type PPIase family. Tig subfamily.

The protein resides in the cytoplasm. The enzyme catalyses [protein]-peptidylproline (omega=180) = [protein]-peptidylproline (omega=0). Its function is as follows. Involved in protein export. Acts as a chaperone by maintaining the newly synthesized protein in an open conformation. Functions as a peptidyl-prolyl cis-trans isomerase. This chain is Trigger factor, found in Geobacter sulfurreducens (strain ATCC 51573 / DSM 12127 / PCA).